Consider the following 476-residue polypeptide: Major facilitator superfamily domain-containing protein 12 (476 aa).

M1 carries the post-translational modification N-acetylmethionine. Over 1–25 (MSPPSDDAGPGPPRTLSLAARLSFA) the chain is Cytoplasmic. A helical transmembrane segment spans residues 26–46 (VGHFLNDLCAGMWFTYLLLFL). The Lumenal portion of the chain corresponds to 47–55 (HSVRGYSSR). A helical membrane pass occupies residues 56–76 (GAGLLLLLGQVADGLCTPLVG). Topologically, residues 77 to 94 (YEADRASCVRCGPRKAWH) are cytoplasmic. A helical transmembrane segment spans residues 95 to 115 (LAGTVCVLLSFPFIFSPCLGC). Residues 116 to 121 (GEATPE) lie on the Lumenal side of the membrane. Residues 122 to 142 (WAALLYYGPFIVVFQFGWAAT) form a helical membrane-spanning segment. Residues 143–167 (QIAHLSLIPELVTSDHEKVELTALR) lie on the Cytoplasmic side of the membrane. The helical transmembrane segment at 168–188 (YAFTVVANITVYGAAWLLLHL) threads the bilayer. Topologically, residues 189–213 (QGSAHGEQDISVGDQLGVQDVPVFR) are lumenal. The helical transmembrane segment at 214-234 (NLALLVVGVGAIFSLLFHLGT) threads the bilayer. The Cytoplasmic segment spans residues 235–284 (KEGHRSQHWGNEPNEHTPLVAPAAQPLLLWKHWLREPAFYQVGMLYMTTR). T251 carries the post-translational modification Phosphothreonine. The chain crosses the membrane as a helical span at residues 285-305 (LIVNLSQTYIAMYLTYSLSLP). K306 is a topological domain (lumenal). Residues 307–327 (KFIATIPLVMYLSGFFSSFLM) traverse the membrane as a helical segment. Over 328-343 (KPVNRRIGRNMTYFTG) the chain is Cytoplasmic. 2 consecutive transmembrane segments (helical) span residues 344–364 (LLVI…GVAV) and 365–385 (YGAA…SLAM). Residues 386-398 (TADLIGPHTHSGA) are Cytoplasmic-facing. A helical transmembrane segment spans residues 399-419 (FVYGAMSFSDKVANGLAVMAV). The Lumenal portion of the chain corresponds to 420–444 (QSLHPCPSELCCGACISFYHWVMTA). A helical membrane pass occupies residues 445 to 465 (VTGGVGVAAALALCSLLIWPI). At 466–476 (RIRNRDPRDRP) the chain is on the cytoplasmic side.

Belongs to the major facilitator superfamily. Phosphorylation at Thr-251 by MTOR via mTORC1 pathway promotes cysteine transport in lysosomes, thereby regulating lysosomal cysteine and cystine storage and redox homeostasis.

Its subcellular location is the melanosome membrane. The protein resides in the lysosome membrane. It catalyses the reaction L-cysteine(in) = L-cysteine(out). Its function is as follows. Transporter that mediates the import of cysteine into melanosomes, thereby regulating skin/hair pigmentation. In melanosomes, cysteine import is required both for normal levels of cystine, the oxidized dimer of cysteine, and provide cysteine for the production of the cysteinyldopas used in pheomelanin synthesis, thereby regulating skin/hair pigmentation. Also catalyzes import of cysteine into lysosomes in non-pigmented cells, regulating lysosomal cystine and cysteine storage, which is essnetial for redox homeostasis. This chain is Major facilitator superfamily domain-containing protein 12, found in Mus musculus (Mouse).